Reading from the N-terminus, the 432-residue chain is Tyrosine--tRNA ligase (432 aa).

The short motif at 46–55 (PTRPDLHLGH) is the 'HIGH' region element. The 'KMSKS' region signature appears at 232-236 (KMSKS). Lys-235 serves as a coordination point for ATP. The 62-residue stretch at 369–430 (IWVARLFTLA…GKDRFVRVRL (62 aa)) folds into the S4 RNA-binding domain.

It belongs to the class-I aminoacyl-tRNA synthetase family. TyrS type 2 subfamily. In terms of assembly, homodimer.

The protein localises to the cytoplasm. It catalyses the reaction tRNA(Tyr) + L-tyrosine + ATP = L-tyrosyl-tRNA(Tyr) + AMP + diphosphate + H(+). Its function is as follows. Catalyzes the attachment of tyrosine to tRNA(Tyr) in a two-step reaction: tyrosine is first activated by ATP to form Tyr-AMP and then transferred to the acceptor end of tRNA(Tyr). The sequence is that of Tyrosine--tRNA ligase from Thermus thermophilus (strain ATCC BAA-163 / DSM 7039 / HB27).